The primary structure comprises 1150 residues: ATP-dependent DNA helicase Q-like 4B (1150 aa).

2 disordered regions span residues 124-143 (TPAIDNDSTSRTSSTKGSTF) and 154-179 (CAHNHPEHSQRSVRGTAKSIDSFSSS). A compositionally biased stretch (low complexity) spans 132–142 (TSRTSSTKGST). Residues 327–361 (DHVEQLHQKRLLLKKQIQQLEILIHNKERKKSQCL) are a coiled coil. A compositionally biased stretch (basic and acidic residues) spans 416-428 (YDISSGSEEREQS). The tract at residues 416–446 (YDISSGSEEREQSVSEVIDVTDTESSNDKKW) is disordered. The Helicase ATP-binding domain maps to 478 to 653 (INATMSGCDV…VQALGLVNCV (176 aa)). ATP is bound at residue 491 to 498 (MPTGGGKS). Residues 597–600 (DEAH) carry the DEAH box motif. The Helicase C-terminal domain occupies 678 to 823 (DIDKFIRENH…QMKMGYNCKA (146 aa)). The region spanning 1029–1111 (SNLSGILLTA…DSTINDHYKT (83 aa)) is the HRDC domain. Positions 1106-1150 (NDHYKTRPGSGKRRRDENVNPNVAEDDDPDWSASQSHKKVVKNKK) are disordered. The segment covering 1141–1150 (SHKKVVKNKK) has biased composition (basic residues).

Belongs to the helicase family. RecQ subfamily. Mg(2+) serves as cofactor. The cofactor is Mn(2+). Mostly expressed in roots, seedlings, shoots, shoot apical mersitem, flowers, and siliques.

It is found in the nucleus. It catalyses the reaction Couples ATP hydrolysis with the unwinding of duplex DNA by translocating in the 3'-5' direction.. The enzyme catalyses ATP + H2O = ADP + phosphate + H(+). Its function is as follows. 3'-5' DNA helicase that may play a role in the repair of DNA. Required to promote but not to suppress crossovers. In Arabidopsis thaliana (Mouse-ear cress), this protein is ATP-dependent DNA helicase Q-like 4B (RECQL4B).